The chain runs to 85 residues: U4-theraphotoxin-Hhn1a (85 aa).

The first 22 residues, 1 to 22 (MKVTLIVILTCAAVLVLHTTAA), serve as a signal peptide directing secretion. A propeptide spanning residues 23–48 (EELEAESQLMEVGMPDTELAAVDEER) is cleaved from the precursor. Disulfide bonds link Cys52/Cys66, Cys56/Cys77, and Cys71/Cys82.

It belongs to the neurotoxin 12 (Hwtx-2) family. 02 (Hwtx-2) subfamily. As to quaternary structure, monomer. Expressed by the venom gland.

The protein localises to the secreted. Its function is as follows. Neurotoxin active on both insects and mammals. The chain is U4-theraphotoxin-Hhn1a from Cyriopagopus hainanus (Chinese bird spider).